The primary structure comprises 208 residues: Proheparin-binding EGF-like growth factor (208 aa).

An N-terminal signal peptide occupies residues 1-23; it reads MKLLPSVMLKLFLAAVLSALVTG. The propeptide occupies 24-62; the sequence is ESLERLRRGLAAATSNPDPPTGSTNQLLPTGGDRAQGVQ. Topologically, residues 24-160 are extracellular; sequence ESLERLRRGL…ENPLYTYDHT (137 aa). Disordered regions lie at residues 35-57 and 80-104; these read AATS…GGDR and PQGL…LGKK. Residues 36–51 are compositionally biased toward polar residues; sequence ATSNPDPPTGSTNQLL. O-linked (GalNAc...) threonine glycosylation is present at threonine 85. Positions 91-102 are enriched in basic residues; that stretch reads NGKKKKKGKGLG. The 41-residue stretch at 104–144 folds into the EGF-like domain; the sequence is KRDPCLRKYKDYCIHGECRYLQEFRTPSCKCLPGYHGHRCH. Intrachain disulfides connect cysteine 108/cysteine 121, cysteine 116/cysteine 132, and cysteine 134/cysteine 143. A propeptide spans 149–208 (C-terminal); sequence PVENPLYTYDHTTVLAVVAVVLSSVCLLVIVGLLMFRYHRRGGYDLESEEKVKLGVASSH. The chain crosses the membrane as a helical span at residues 161–184; sequence TVLAVVAVVLSSVCLLVIVGLLMF. Residues 185–208 lie on the Cytoplasmic side of the membrane; that stretch reads RYHRRGGYDLESEEKVKLGVASSH.

As to quaternary structure, interacts with FBLN1. Interacts with EGFR and ERBB4. O-glycosylated. In terms of tissue distribution, most abundant in kidney, skeletal muscle, lung, spleen, brain and heart.

The protein localises to the secreted. It is found in the extracellular space. It localises to the cell membrane. Growth factor that mediates its effects via EGFR, ERBB2 and ERBB4. Required for normal cardiac valve formation and normal heart function. Promotes smooth muscle cell proliferation. May be involved in macrophage-mediated cellular proliferation. It is mitogenic for fibroblasts, but not endothelial cells. It is able to bind EGF receptor/EGFR with higher affinity than EGF itself and is a far more potent mitogen for smooth muscle cells than EGF. Also acts as a diphtheria toxin receptor. The polypeptide is Proheparin-binding EGF-like growth factor (Hbegf) (Mus musculus (Mouse)).